We begin with the raw amino-acid sequence, 119 residues long: Holo-[acyl-carrier-protein] synthase (119 aa).

Positions 8 and 58 each coordinate Mg(2+).

This sequence belongs to the P-Pant transferase superfamily. AcpS family. It depends on Mg(2+) as a cofactor.

It is found in the cytoplasm. It catalyses the reaction apo-[ACP] + CoA = holo-[ACP] + adenosine 3',5'-bisphosphate + H(+). Functionally, transfers the 4'-phosphopantetheine moiety from coenzyme A to a Ser of acyl-carrier-protein. This chain is Holo-[acyl-carrier-protein] synthase, found in Bacillus cereus (strain ATCC 10987 / NRS 248).